The sequence spans 74 residues: UPF0235 protein tsr1994 (74 aa).

This sequence belongs to the UPF0235 family.

The protein is UPF0235 protein tsr1994 of Thermosynechococcus vestitus (strain NIES-2133 / IAM M-273 / BP-1).